We begin with the raw amino-acid sequence, 660 residues long: F-box/LRR-repeat protein 5 (660 aa).

The interval 1 to 157 is hemerythrin-like; sequence MAPFPDEVDL…IKKKVIAQHC (157 aa). Fe(3+) contacts are provided by H15, H57, E58, E61, H80, H124, and E127. One can recognise an F-box domain in the interval 200-246; that stretch reads SASICNLPPEVMLNIFSYLNPQDLCRCSQVNTKWAQLARTGSLWRHL. Residues 283-305 are disordered; it reads YQEWDEDADIDESEETGEDDPSI. Over residues 285–303 the composition is skewed to acidic residues; the sequence is EWDEDADIDESEETGEDDP. LRR repeat units lie at residues 311–337, 338–362, 363–389, 390–417, 551–576, 577–604, 605–630, and 631–649; these read EKELLNSLVHYILPYIGHSVKTLVLAY, SSATSNKVIRQILEYCPNMEHLDLT, QTDISDSAFNGWCFGACQTLRHIDLSG, CEKITDSALEKLSVALGMPLAHKKRLLK, IRDICPGSAKLDQQVARVLQFLSLSG, CHQITDHGLRVLTIGGGLPNLEHLNLSG, CLNVTGSGLQDLVSACPSLNDEHFYY, and CDNISGPHAATASGCQNLQ. [2Fe-2S] cluster is bound by residues C631, C645, C655, and C656.

In terms of assembly, part of a SCF (SKP1-cullin-F-box) protein ligase complex. It depends on [2Fe-2S] cluster as a cofactor. Post-translationally, ubiquitinated upon iron and oxygen depletion, leading to its degradation by the proteasome. Ubiquitination is regulated by the hemerythrin-like region that acts as an oxygen and iron sensor.

Its subcellular location is the cytoplasm. It is found in the perinuclear region. The protein resides in the nucleus. It participates in protein modification; protein ubiquitination. In terms of biological role, component of some SCF (SKP1-cullin-F-box) protein ligase complex that plays a central role in iron homeostasis by promoting the ubiquitination and subsequent degradation of ireb2/irp2. Upon high iron and oxygen level, it specifically recognizes and binds ireb2/irp2, promoting its ubiquitination and degradation by the proteasome. The polypeptide is F-box/LRR-repeat protein 5 (fbxl5) (Xenopus tropicalis (Western clawed frog)).